The primary structure comprises 220 residues: Adenylate kinase (220 aa).

Position 13-18 (13-18 (GAGKGT)) interacts with ATP. The segment at 33–62 (STGDILRAAVKEGTPLGLEAQSYMNRGALV) is NMP. AMP-binding positions include Thr34, Arg39, 60–62 (ALV), 88–91 (GFPR), and Gln95. Residues 129–170 (GRRTCPLCKRIFHVRFNPPPAAPPFCTDHTDCPSELVQRPDD) form an LID region. Arg130 is a binding site for ATP. Zn(2+) is bound by residues Cys133 and Cys136. An ATP-binding site is contributed by 139–140 (IF). Zn(2+) is bound by residues Asp156 and Cys160. Residues Arg167 and Arg178 each coordinate AMP. An ATP-binding site is contributed by Arg206.

This sequence belongs to the adenylate kinase family. Monomer.

The protein resides in the cytoplasm. The catalysed reaction is AMP + ATP = 2 ADP. It functions in the pathway purine metabolism; AMP biosynthesis via salvage pathway; AMP from ADP: step 1/1. In terms of biological role, catalyzes the reversible transfer of the terminal phosphate group between ATP and AMP. Plays an important role in cellular energy homeostasis and in adenine nucleotide metabolism. In Gloeobacter violaceus (strain ATCC 29082 / PCC 7421), this protein is Adenylate kinase.